A 105-amino-acid chain; its full sequence is Large ribosomal subunit protein bL21 (105 aa).

Belongs to the bacterial ribosomal protein bL21 family. As to quaternary structure, part of the 50S ribosomal subunit. Contacts protein L20.

In terms of biological role, this protein binds to 23S rRNA in the presence of protein L20. The sequence is that of Large ribosomal subunit protein bL21 from Rickettsia peacockii (strain Rustic).